Here is a 373-residue protein sequence, read N- to C-terminus: Quinolinate synthase (373 aa).

Residues H46 and S63 each coordinate iminosuccinate. Position 109 (C109) interacts with [4Fe-4S] cluster. Residues 142-144 (YMN) and S163 each bind iminosuccinate. Residue C232 participates in [4Fe-4S] cluster binding. Residues 258-260 (HPE) and T275 each bind iminosuccinate. A [4Fe-4S] cluster-binding site is contributed by C324.

This sequence belongs to the quinolinate synthase family. Type 3 subfamily. It depends on [4Fe-4S] cluster as a cofactor.

The protein resides in the cytoplasm. The catalysed reaction is iminosuccinate + dihydroxyacetone phosphate = quinolinate + phosphate + 2 H2O + H(+). The protein operates within cofactor biosynthesis; NAD(+) biosynthesis; quinolinate from iminoaspartate: step 1/1. In terms of biological role, catalyzes the condensation of iminoaspartate with dihydroxyacetone phosphate to form quinolinate. This is Quinolinate synthase from Acidobacterium capsulatum (strain ATCC 51196 / DSM 11244 / BCRC 80197 / JCM 7670 / NBRC 15755 / NCIMB 13165 / 161).